The sequence spans 375 residues: Growth/differentiation factor 8 (375 aa).

Positions 1–23 (MQKLQIYVYIYLFMLIVAGPVDL) are cleaved as a signal peptide. The propeptide occupies 24-266 (NENSEQKENV…VTDTPKRSRR (243 aa)). The N-linked (GlcNAc...) asparagine glycan is linked to N71. Disulfide bonds link C272–C282, C281–C340, C309–C372, and C313–C374.

Belongs to the TGF-beta family. In terms of assembly, homodimer; disulfide-linked. Interacts with WFIKKN2, leading to inhibit its activity. Interacts with FSTL3. In terms of processing, synthesized as large precursor molecule that undergoes proteolytic cleavage to generate an N-terminal propeptide and a disulfide linked C-terminal dimer, which is the biologically active molecule. The circulating form consists of a latent complex of the C-terminal dimer and other proteins, including its propeptide, which maintain the C-terminal dimer in a latent, inactive state. Ligand activation requires additional cleavage of the prodomain by a tolloid-like metalloproteinase.

The protein resides in the secreted. Functionally, acts specifically as a negative regulator of skeletal muscle growth. The sequence is that of Growth/differentiation factor 8 (MSTN) from Sus scrofa (Pig).